The sequence spans 334 residues: Holliday junction branch migration complex subunit RuvB (334 aa).

The large ATPase domain (RuvB-L) stretch occupies residues 4–186; that stretch reads ADRLIAPISN…FGIVQRLEYY (183 aa). Residues Ile-25, Arg-26, Gly-67, Lys-70, Thr-71, Thr-72, 133–135, Arg-176, Tyr-186, and Arg-223 contribute to the ATP site; that span reads EDY. Mg(2+) is bound at residue Thr-71. Residues 187-257 are small ATPAse domain (RuvB-S); that stretch reads KVADLQHIVQ…TADRALNMLD (71 aa). Residues 260–334 are head domain (RuvB-H); that stretch reads HQGFDYMDRK…RAYLHFGIEK (75 aa). DNA is bound by residues Arg-315 and Arg-320.

It belongs to the RuvB family. In terms of assembly, homohexamer. Forms an RuvA(8)-RuvB(12)-Holliday junction (HJ) complex. HJ DNA is sandwiched between 2 RuvA tetramers; dsDNA enters through RuvA and exits via RuvB. An RuvB hexamer assembles on each DNA strand where it exits the tetramer. Each RuvB hexamer is contacted by two RuvA subunits (via domain III) on 2 adjacent RuvB subunits; this complex drives branch migration. In the full resolvosome a probable DNA-RuvA(4)-RuvB(12)-RuvC(2) complex forms which resolves the HJ.

The protein localises to the cytoplasm. The enzyme catalyses ATP + H2O = ADP + phosphate + H(+). The RuvA-RuvB-RuvC complex processes Holliday junction (HJ) DNA during genetic recombination and DNA repair, while the RuvA-RuvB complex plays an important role in the rescue of blocked DNA replication forks via replication fork reversal (RFR). RuvA specifically binds to HJ cruciform DNA, conferring on it an open structure. The RuvB hexamer acts as an ATP-dependent pump, pulling dsDNA into and through the RuvAB complex. RuvB forms 2 homohexamers on either side of HJ DNA bound by 1 or 2 RuvA tetramers; 4 subunits per hexamer contact DNA at a time. Coordinated motions by a converter formed by DNA-disengaged RuvB subunits stimulates ATP hydrolysis and nucleotide exchange. Immobilization of the converter enables RuvB to convert the ATP-contained energy into a lever motion, pulling 2 nucleotides of DNA out of the RuvA tetramer per ATP hydrolyzed, thus driving DNA branch migration. The RuvB motors rotate together with the DNA substrate, which together with the progressing nucleotide cycle form the mechanistic basis for DNA recombination by continuous HJ branch migration. Branch migration allows RuvC to scan DNA until it finds its consensus sequence, where it cleaves and resolves cruciform DNA. This Vibrio cholerae serotype O1 (strain ATCC 39315 / El Tor Inaba N16961) protein is Holliday junction branch migration complex subunit RuvB.